The sequence spans 98 residues: NADH-ubiquinone oxidoreductase chain 4L (98 aa).

3 consecutive transmembrane segments (helical) span residues 1 to 21, 30 to 50, and 61 to 81; these read MSLTYFNVMLAFTMSFLGLLM, LLCLEGLMLSLFVLVTITILI, and IILLVFAACEAALGLSLLVAV.

The protein belongs to the complex I subunit 4L family. In terms of assembly, core subunit of respiratory chain NADH dehydrogenase (Complex I) which is composed of 45 different subunits.

Its subcellular location is the mitochondrion inner membrane. The enzyme catalyses a ubiquinone + NADH + 5 H(+)(in) = a ubiquinol + NAD(+) + 4 H(+)(out). Functionally, core subunit of the mitochondrial membrane respiratory chain NADH dehydrogenase (Complex I) which catalyzes electron transfer from NADH through the respiratory chain, using ubiquinone as an electron acceptor. Part of the enzyme membrane arm which is embedded in the lipid bilayer and involved in proton translocation. This Pipistrellus abramus (Japanese pipistrelle) protein is NADH-ubiquinone oxidoreductase chain 4L (MT-ND4L).